Reading from the N-terminus, the 613-residue chain is Phosphoinositide phospholipase C 6 (613 aa).

Residues 137–281 (QDMTAPLSHY…LLHRIIISTK (145 aa)) enclose the PI-PLC X-box domain. Residues H152 and H198 contribute to the active site. Residues 288–349 (ESRNPIVKQK…ASEDQKPAYK (62 aa)) are disordered. Positions 349–465 (KRLITIHAGK…GYVKKPNFLM (117 aa)) constitute a PI-PLC Y-box domain. Residues 466–595 (KKGFHDEVFD…PGIRSVPLYD (130 aa)) form the C2 domain.

Ca(2+) is required as a cofactor. In terms of tissue distribution, expressed in leaves, flowers and siliques, but not in roots.

Its subcellular location is the cell membrane. It carries out the reaction a 1,2-diacyl-sn-glycero-3-phospho-(1D-myo-inositol-4,5-bisphosphate) + H2O = 1D-myo-inositol 1,4,5-trisphosphate + a 1,2-diacyl-sn-glycerol + H(+). In terms of biological role, the production of the second messenger molecules diacylglycerol (DAG) and inositol 1,4,5-trisphosphate (IP3) is mediated by activated phosphatidylinositol-specific phospholipase C enzymes. This chain is Phosphoinositide phospholipase C 6 (PLC6), found in Arabidopsis thaliana (Mouse-ear cress).